Consider the following 394-residue polypeptide: Protein arginine N-methyltransferase 8 (394 aa).

Residue G2 is the site of N-myristoyl glycine attachment. The tract at residues 21–40 is disordered; the sequence is VESTEVSSAPPQPPQPVIPA. 2 consecutive short sequence motifs (SH3-binding) follow at residues 29-42 and 53-58; these read APPQPPQPVIPAKP and PSCPGR. The span at 30-39 shows a compositional bias: pro residues; the sequence is PPQPPQPVIP. Omega-N-methylarginine; by PRMT8 is present on R58. An Asymmetric dimethylarginine; by PRMT8 modification is found at R73. Residues 73–394 form the SAM-dependent MTase PRMT-type domain; the sequence is RDYYFDSYAH…TSVSNDYKMR (322 aa). Residues H86, R95, G119, 119 to 122, E141, and E170 contribute to the S-adenosyl-L-methionine site; that span reads GSGT. Residues E185 and E194 contribute to the active site.

The protein belongs to the class I-like SAM-binding methyltransferase superfamily. Protein arginine N-methyltransferase family. PRMT8 subfamily. Homodimer. Tetramer; individual homodimers associates to form a homotetramer. Homooctamer; individual homodimers associates to form a homooctamer and homooligomerization is required for proper localization to the cell membrane. Heterodimer with PRMT1; heterodimerization may recruit PRMT1 activity to the plasma membrane. Interacts with PRMT2 (via the SH3 domain). Interacts with FYN (via the SH3 domain). Interacts with EWS; independently of EWS methylation status. In terms of tissue distribution, brain-specific. Only expressed in neurons, especially in the somatosensory and limbic systems, and a part of motor system. Highly expressed in all of the regions related to general somatosensory system. Expressed in most of the relay nuclei intervening the special somatosensory system, such as the auditory, visual and vestibular systems. Also present in forebrain limbic areas and thalamic nuclei relevant to limbic areas and in areas related to the motor system, such as the caudate putamen, Purkinje cells, inferior olivary nucleus and cerebellar nuclei.

It is found in the cell membrane. It carries out the reaction L-arginyl-[protein] + S-adenosyl-L-methionine = N(omega)-methyl-L-arginyl-[protein] + S-adenosyl-L-homocysteine + H(+). It catalyses the reaction L-arginyl-[protein] + 2 S-adenosyl-L-methionine = N(omega),N(omega)-dimethyl-L-arginyl-[protein] + 2 S-adenosyl-L-homocysteine + 2 H(+). Functionally, S-adenosyl-L-methionine-dependent and membrane-associated arginine methyltransferase that can both catalyze the formation of omega-N monomethylarginine (MMA) and asymmetrical dimethylarginine (aDMA) in proteins such as NIFK, myelin basic protein, histone H4, H2A and H2A/H2B dimer. Able to mono- and dimethylate EWS protein; however its precise role toward EWS remains unclear as it still interacts with fully methylated EWS. This Mus musculus (Mouse) protein is Protein arginine N-methyltransferase 8.